The following is a 1386-amino-acid chain: MPEGAQGLSLSKPSPSLGCGRRGEVCDCGTVCETRTAPAAPTMASPRGSGSSTSLSTVGSEGDPAPGPTPACSASRPEPLPGPPIRLHLSPVGIPGSARPSRLERVAREIVETERAYVRDLRSIVEDYLGPLLDGGVLGLSVEQVGTLFANIEDIYEFSSELLEDLENSSSAGGIAECFVQRSEDFDIYTLYCMNYPSSLALLRELSLSPPAALWLQERQAQLRHSLPLQSFLLKPVQRILKYHLLLQELGKHWAEGPGTGGREMVEEAIVSMTAVAWYINDMKRKQEHAARLQEVQRRLGGWTGPELSAFGELVLEGAFRGGGGGGPRLRGGERLLFLFSRMLLVAKRRGLEYTYKGHIFCCNLSVSESPRDPLGFKVSDLTIPKHRHLLQAKNQEEKRLWIHCLQRLFFENHPASIPAKAKQVLLENSLHCAPKSKPVLEPLTPPLGSPRPRDARSFTPGRRNTAPSPGPSVIRRGRRQSEPVKDPYVMFPQNAKPGFKHAGSEGELYPPESQPPVSGSAPPEDLEDAGPPTLDPSGTSITEEILELLNQRGLRDPGPSTHDIPKFPGDSQVPGDSETLTFQALPSRDSSEEEEEEEEGLEMDERGPSPLHVLEGLESSIAAEMPSIPCLTKIPDVPNLPEIPSRCEIPEGSRLPSLSDISDVFEMPCLPAIPSVPNTPSLSSTPTLSCDSWLQGPLQEPAEAPATRRELFSGSNPGKLGEPPSGGKAGPEEDEEGVSFTDFQPQDVTQHQGFPDELAFRSCSEIRSAWQALEQGQLARPGFPEPLLILEDSDLGGDSGSGKAGAPSSERTASRVRELARLYSERIQQMQRAETRASANAPRRRPRVLAQPQPSPCLPQEQAEPGLLPAFGHVLVCELAFPLTCAQESVPLGPAVWVQAAIPLSKQGGSPDGQGLHVSNLPKQDLPGIHVSAATLLPEQGGSRHVQAPAATPLPKQEGPLHLQVPALTTFSDQGHPEIQVPATTPLPEHRSHMVIPAPSTAFCPEQGHCADIHVPTTPALPKEICSDFTVSVTTPVPKQEGHLDSESPTNIPLTKQGGSRDVQGPDPVCSQPIQPLSWHGSSLDPQGPGDTLPPLPCHLPDLQIPGTSPLPAHGSHLDHRIPANAPLSLSQELPDTQVPATTPLPLPQVLTDIWVQALPTSPKQGSLPDIQGPAAAPPLPEPSLTDTQVQKLTPSLEQKSLIDAHVPAATPLPERGGSLDIQGLSPTPVQTTMVLSKPGGSLASHVARLESSDLTPPHSPPPSSRQLLGPNAAALSRYLAASYISQSLARRQGPGGGAPAASRGSWSSAPTSRASSPPPQPQPPPPPARRLSYATTVNIHVGGGGRLRPAKAQVRLNHPALLASTQESMGLHRAQGAPDAPFHM.

Disordered regions lie at residues 1 to 21 and 36 to 82; these read MPEGAQGLSLSKPSPSLGCGR and TAPA…PLPG. Low complexity-rich tracts occupy residues 8-17 and 45-62; these read LSLSKPSPSL and SPRGSGSSTSLSTVGSEG. Ser-90 is modified (phosphoserine). Residues 102–283 form the DH domain; the sequence is RLERVAREIV…TAVAWYINDM (182 aa). The region spanning 313–411 is the PH domain; sequence ELVLEGAFRG…WIHCLQRLFF (99 aa). Disordered regions lie at residues 436–540, 554–612, 701–739, 790–815, and 829–859; these read KSKP…PSGT, GLRD…PSPL, EPAEAPATRRELFSGSNPGKLGEPPSGGKAGPEEDEEGV, ILEDSDLGGDSGSGKAGAPSSERTAS, and QQMQRAETRASANAPRRRPRVLAQPQPSPCL. Phosphothreonine is present on Thr-445. Ser-450 and Ser-469 each carry phosphoserine. Over residues 592–603 the composition is skewed to acidic residues; the sequence is SEEEEEEEEGLE. Ser-911 and Ser-1049 each carry phosphoserine. Disordered regions lie at residues 1037 to 1099 and 1162 to 1191; these read PVPK…PLPC and TSPKQGSLPDIQGPAAAPPLPEPSLTDTQV. Composition is skewed to polar residues over residues 1048-1059 and 1073-1086; these read ESPTNIPLTKQG and QPIQPLSWHGSSLD. Thr-1257 is subject to Phosphothreonine. Residues Ser-1261 and Ser-1310 each carry the phosphoserine modification. 2 disordered regions span residues 1291 to 1333 and 1367 to 1386; these read ARRQ…ARRL and TQESMGLHRAQGAPDAPFHM. A compositionally biased stretch (low complexity) spans 1301–1317; sequence PAASRGSWSSAPTSRAS. Over residues 1318–1330 the composition is skewed to pro residues; the sequence is SPPPQPQPPPPPA.

May be a transforming oncogene with exchange activity for CDC42. May be a guanine-nucleotide exchange factor (GEF) for RAC1 and CDC42. Activated by the binding to subunits beta and gamma of the heterotrimeric guanine nucleotide-binding protein (G protein). Involved in the regulation of actin polymerization. The chain is Pleckstrin homology domain-containing family G member 2 (PLEKHG2) from Homo sapiens (Human).